A 129-amino-acid chain; its full sequence is Small ribosomal subunit protein uS11 (129 aa).

It belongs to the universal ribosomal protein uS11 family. Part of the 30S ribosomal subunit. Interacts with proteins S7 and S18. Binds to IF-3.

In terms of biological role, located on the platform of the 30S subunit, it bridges several disparate RNA helices of the 16S rRNA. Forms part of the Shine-Dalgarno cleft in the 70S ribosome. This is Small ribosomal subunit protein uS11 from Rhizorhabdus wittichii (strain DSM 6014 / CCUG 31198 / JCM 15750 / NBRC 105917 / EY 4224 / RW1) (Sphingomonas wittichii).